Consider the following 365-residue polypeptide: MGPCSGSRLGPPEAESPSQPPKRRKKRYLRHDKPPYTYLAMIALVIQAAPSRRLKLAQIIRQVQAVFPFFREDYEGWKDSIRHNLSSNRCFRKVPKDPAKPQAKGNFWAVDVSLIPAEALRLQNTALCRRWQNGGARGAFAKDLGPYVLHGRPYRPPSPPPPPSEGFSIKSLLGGSGEGAPWPGLAPQSSPVPAGTGNSGEEAVPTPPLPSSERPLWPLCPLPGPTRVEGETVQGGAIGPSTLSPEPRAWPLHLLQGTAVPGGRSSGGHRASLWGQLPTSYLPIYTPNVVMPLAPPPTSCPQCPSTSPAYWGVAPETRGPPGLLCDLDALFQGVPPNKSIYDVWVSHPRDLAAPGPGWLLSWCSL.

The tract at residues Met1–Leu29 is disordered. A DNA-binding region (fork-head) is located at residues Asp32–Cys128. The tract at residues Gly151–Pro215 is disordered. Residues Tyr154–Ser164 show a composition bias toward pro residues. Residues Leu273–Pro354 form an SMAD-interaction domain (SID) region. Residues Leu277 to Tyr281 carry the Fast/FoxH1 motif 1 (FM1) motif. The short motif at Pro287–Leu293 is the Fast/FoxH1 motif 2 (FM2) element. The short motif at Leu327–Pro348 is the SMAD interaction motif (SIM) element.

As to quaternary structure, interacts with the MH2 domains of SMAD2 and SMAD3. Ubiquitous.

Its subcellular location is the nucleus. Transcriptional activator. Recognizes and binds to the DNA sequence 5'-TGT[GT][GT]ATT-3'. Required for induction of the goosecoid (GSC) promoter by TGF-beta or activin signaling. Forms a transcriptionally active complex containing FOXH1/SMAD2/SMAD4 on a site on the GSC promoter called TARE (TGF-beta/activin response element). The protein is Forkhead box protein H1 (FOXH1) of Homo sapiens (Human).